A 90-amino-acid polypeptide reads, in one-letter code: uncharacterized protein (90 aa).

Residues 32 to 52 (IIINLIPLVLLFAFFCPCIYF) form a helical membrane-spanning segment.

Its subcellular location is the membrane. This is an uncharacterized protein from Schizosaccharomyces pombe (strain 972 / ATCC 24843) (Fission yeast).